We begin with the raw amino-acid sequence, 454 residues long: UDP-N-acetylmuramate--L-alanine ligase (454 aa).

ATP is bound at residue 112–118 (GTHGKTT).

This sequence belongs to the MurCDEF family.

It localises to the cytoplasm. The enzyme catalyses UDP-N-acetyl-alpha-D-muramate + L-alanine + ATP = UDP-N-acetyl-alpha-D-muramoyl-L-alanine + ADP + phosphate + H(+). The protein operates within cell wall biogenesis; peptidoglycan biosynthesis. Its function is as follows. Cell wall formation. The polypeptide is UDP-N-acetylmuramate--L-alanine ligase (Nitratidesulfovibrio vulgaris (strain ATCC 29579 / DSM 644 / CCUG 34227 / NCIMB 8303 / VKM B-1760 / Hildenborough) (Desulfovibrio vulgaris)).